We begin with the raw amino-acid sequence, 275 residues long: Adenosylcobinamide-GDP ribazoletransferase (275 aa).

6 helical membrane passes run 52 to 72 (VVGV…GVLG), 73 to 93 (VTPL…NRMM), 126 to 146 (MGFS…AALV), 181 to 201 (FGAM…LVAL), 208 to 228 (VAVW…GIIA), and 251 to 271 (IGAG…VAVA).

The protein belongs to the CobS family. Mg(2+) serves as cofactor.

It is found in the cell membrane. It catalyses the reaction alpha-ribazole + adenosylcob(III)inamide-GDP = adenosylcob(III)alamin + GMP + H(+). It carries out the reaction alpha-ribazole 5'-phosphate + adenosylcob(III)inamide-GDP = adenosylcob(III)alamin 5'-phosphate + GMP + H(+). Its pathway is cofactor biosynthesis; adenosylcobalamin biosynthesis; adenosylcobalamin from cob(II)yrinate a,c-diamide: step 7/7. In terms of biological role, joins adenosylcobinamide-GDP and alpha-ribazole to generate adenosylcobalamin (Ado-cobalamin). Also synthesizes adenosylcobalamin 5'-phosphate from adenosylcobinamide-GDP and alpha-ribazole 5'-phosphate. The chain is Adenosylcobinamide-GDP ribazoletransferase from Corynebacterium efficiens (strain DSM 44549 / YS-314 / AJ 12310 / JCM 11189 / NBRC 100395).